An 86-amino-acid chain; its full sequence is U1-theraphotoxin-Pc1a (86 aa).

Residues 1 to 21 (MMRVLIVTAVFTFFLVLTSSG) form the signal peptide. A propeptide spanning residues 22–49 (HDEDNEQRNILEGMFLDRAIETPKGLEE) is cleaved from the precursor. 3 disulfides stabilise this stretch: C53–C70, C60–C75, and C69–C80. V84 is modified (valine amide).

As to expression, expressed by the venom gland.

It is found in the secreted. Possesses strong antiplasmodial activity against the intra-erythrocyte stage of P.falciparum in vitro. IC(50) for inhibiting P.falciparum growth is 1.59 uM. Interacts with infected and healthy erythrocytes. Does not lyse erythrocytes, is not cytotoxic to nucleated mammalian cells, and does not inhibit neuromuscular function. Has neither antibacterial nor antifungal activity. In Psalmopoeus cambridgei (Trinidad chevron tarantula), this protein is U1-theraphotoxin-Pc1a.